The following is a 396-amino-acid chain: Glideosome-associated protein 50 (396 aa).

At Met-1–Arg-369 the chain is on the lumenal side. The a metal cation site is built by His-195 and His-256. Residues Val-370–Phe-390 traverse the membrane as a helical segment. Residues Leu-391 to Lys-396 lie on the Cytoplasmic side of the membrane.

Belongs to the metallophosphoesterase superfamily. Purple acid phosphatase family. In terms of assembly, component of the glideosome complex composed of GAP50, GAP45, MTIP and MyoA; the complex is formed during the late schizont stage and in merozoites. MyoA, MTIP and GAP45 probably form an initial complex in the cytoplasm which is then recruited to the outer face of the inner membrane complex via the interaction with GAP50. Interacts with GAP45; the interaction is independent of GAP45 phosphorylation status and can also occur independently of the formation of the glideosome complex. Interacts with human factor H isoform CFH (via sushi 6-7 domains) and isoform FHL-1 (via sushi 6-7 domains); the interaction occurs in the vector mosquito midgut at the surface of activated gametocytes; the interaction protects the parasite from alternative complement pathway-mediated elimination. A metal cation is required as a cofactor. In terms of processing, the N-terminus signal is likely to be cleaved.

The protein localises to the inner membrane complex. It localises to the cell membrane. Its subcellular location is the endoplasmic reticulum membrane. The enzyme catalyses a phosphate monoester + H2O = an alcohol + phosphate. Activity is independent of metal ions. Component of the glideosome complex, an inner membrane complex structure involved in parasite gliding motility and host cell invasion. During the asexual blood stage, may play a role in the assembly and anchoring of the glideosome complex to the inner membrane complex. During the sexual stage in the vector mosquito midgut, protects gametocytes against host alternative complement pathway-mediated elimination by interacting with host complement inhibitor factor H. Has phosphatase activity towards nucleotides such as ATP, vitamins B1 and B6, phosphorylated sugars, glycerol phosphates and inositol triphosphates. However, the phosphatase activity is controversial. This Plasmodium falciparum (isolate 3D7) protein is Glideosome-associated protein 50.